A 270-amino-acid chain; its full sequence is UPF0246 protein Psyc_0554 (270 aa).

It belongs to the UPF0246 family.

The sequence is that of UPF0246 protein Psyc_0554 from Psychrobacter arcticus (strain DSM 17307 / VKM B-2377 / 273-4).